We begin with the raw amino-acid sequence, 476 residues long: Cysteine--tRNA ligase (476 aa).

Cysteine 27 contacts Zn(2+). Positions 29–39 (ITPYDSVHVGH) match the 'HIGH' region motif. Positions 213, 238, and 242 each coordinate Zn(2+). Residues 271–275 (KMSKS) carry the 'KMSKS' region motif. Residue lysine 274 participates in ATP binding.

The protein belongs to the class-I aminoacyl-tRNA synthetase family. Zn(2+) serves as cofactor.

Its subcellular location is the cytoplasm. It catalyses the reaction tRNA(Cys) + L-cysteine + ATP = L-cysteinyl-tRNA(Cys) + AMP + diphosphate. In Pyrobaculum arsenaticum (strain DSM 13514 / JCM 11321 / PZ6), this protein is Cysteine--tRNA ligase.